Reading from the N-terminus, the 185-residue chain is Large ribosomal subunit protein uL5 (185 aa).

This sequence belongs to the universal ribosomal protein uL5 family. Part of the 50S ribosomal subunit; part of the 5S rRNA/L5/L18/L25 subcomplex. Contacts the 5S rRNA and the P site tRNA. Forms a bridge to the 30S subunit in the 70S ribosome.

This is one of the proteins that bind and probably mediate the attachment of the 5S RNA into the large ribosomal subunit, where it forms part of the central protuberance. In the 70S ribosome it contacts protein S13 of the 30S subunit (bridge B1b), connecting the 2 subunits; this bridge is implicated in subunit movement. Contacts the P site tRNA; the 5S rRNA and some of its associated proteins might help stabilize positioning of ribosome-bound tRNAs. This Protochlamydia amoebophila (strain UWE25) protein is Large ribosomal subunit protein uL5.